A 160-amino-acid chain; its full sequence is uncharacterized protein (160 aa).

Positions glutamate 20–arginine 152 constitute an HTH marR-type domain. The segment at residues valine 66 to lysine 89 is a DNA-binding region (H-T-H motif).

This is an uncharacterized protein from Bacillus subtilis (strain 168).